The sequence spans 75 residues: Protein BsdD (75 aa).

Its function is as follows. Involved in the non-oxidative decarboxylation and detoxification of phenolic derivatives under both aerobic and anaerobic conditions, however the precise biochemical function of BsdD in metabolism of phenolic acid is unknown. The chain is Protein BsdD from Bacillus subtilis (strain 168).